Reading from the N-terminus, the 722-residue chain is Protein HAPLESS 2-A (722 aa).

An N-terminal signal peptide occupies residues 1–24; it reads MPRRRGTPLPTILLLLAFVGGACG. Residues 25–552 are Extracellular-facing; sequence TEILSKSRLE…LFDFGCHIQY (528 aa). 7 disulfides stabilise this stretch: cysteine 36/cysteine 48, cysteine 129/cysteine 159, cysteine 141/cysteine 188, cysteine 160/cysteine 315, cysteine 162/cysteine 171, cysteine 298/cysteine 322, and cysteine 435/cysteine 473. A helical transmembrane segment spans residues 553–573; it reads VCIGWILLLLLIPAAVVFLWL. The Cytoplasmic portion of the chain corresponds to 574–722; the sequence is LHQEGLFDPL…HRDGHYSPSV (149 aa). Basic residues predominate over residues 598–641; that stretch reads RRRHQKGRHHRHHHDHRHRHGHSHGDHHHHYHGGHHQRRRHHHP. 2 disordered regions span residues 598-665 and 680-722; these read RRRH…RNHH and RLDR…SPSV. A compositionally biased stretch (basic and acidic residues) spans 646–662; the sequence is VEGHHHDRQQHSHEAGR. The span at 701-711 shows a compositional bias: basic residues; that stretch reads RRSRHERHGGH. Residues 712-722 show a composition bias toward basic and acidic residues; that stretch reads GHRDGHYSPSV.

The protein belongs to the HAP2/GCS1 family.

The protein resides in the endoplasmic reticulum membrane. Its subcellular location is the cell membrane. In terms of biological role, required for male fertility. Plays a role in pollen tube guidance and successful gamete attachment. Essential for the fusion of gametes during double fertilization, where one male gamete fuses with the egg to produce a zygote, and another male gamete fuses with the central cell to produce the endosperm. Mediates the fusion of cell membranes. Not required for pollen tube outgrowth. The chain is Protein HAPLESS 2-A (HAP2A) from Oryza sativa subsp. japonica (Rice).